Consider the following 278-residue polypeptide: MVRYRLTVEYDGRGYCGWQRQDNGPTIQQSLEEAAFRLCGVATRVHGSGRTDSGVHALGQVAHLDLPRAYGAATVMKALNAHLRPQPIAVIDAAEVAEDFHARFSAEERSYRYRILNRIAPPTLDQGRVWWVARPMEAAIMDEAAQVLVGRHDFSSFRAAECQADSPVKTLSELRVTRVGDEIHVFARARSFLHHQVRNMVGTLALVGDGRWTADRLRAALEACDRSAAGPTAPPDGLYFLRVRFPGETAAPAKAGPLEAAPLGEAPLKEATLKEDWR.

Residue Asp-52 is the Nucleophile of the active site. Tyr-111 is a substrate binding site. Residues 253 to 264 (AKAGPLEAAPLG) show a composition bias toward low complexity. The interval 253-278 (AKAGPLEAAPLGEAPLKEATLKEDWR) is disordered. Basic and acidic residues predominate over residues 267–278 (PLKEATLKEDWR).

The protein belongs to the tRNA pseudouridine synthase TruA family. In terms of assembly, homodimer.

The enzyme catalyses uridine(38/39/40) in tRNA = pseudouridine(38/39/40) in tRNA. Functionally, formation of pseudouridine at positions 38, 39 and 40 in the anticodon stem and loop of transfer RNAs. The protein is tRNA pseudouridine synthase A of Rhodospirillum rubrum (strain ATCC 11170 / ATH 1.1.1 / DSM 467 / LMG 4362 / NCIMB 8255 / S1).